The primary structure comprises 401 residues: Imidazolonepropionase (401 aa).

Fe(3+)-binding residues include His66 and His68. 2 residues coordinate Zn(2+): His66 and His68. The 4-imidazolone-5-propanoate site is built by Arg75, Tyr138, and His171. Tyr138 is a binding site for N-formimidoyl-L-glutamate. His236 serves as a coordination point for Fe(3+). His236 is a binding site for Zn(2+). Position 239 (Gln239) interacts with 4-imidazolone-5-propanoate. Fe(3+) is bound at residue Asp311. Residue Asp311 participates in Zn(2+) binding. N-formimidoyl-L-glutamate is bound by residues Asn313 and Gly315. Residue Thr316 coordinates 4-imidazolone-5-propanoate.

This sequence belongs to the metallo-dependent hydrolases superfamily. HutI family. Requires Zn(2+) as cofactor. It depends on Fe(3+) as a cofactor.

The protein resides in the cytoplasm. The catalysed reaction is 4-imidazolone-5-propanoate + H2O = N-formimidoyl-L-glutamate. It participates in amino-acid degradation; L-histidine degradation into L-glutamate; N-formimidoyl-L-glutamate from L-histidine: step 3/3. Catalyzes the hydrolytic cleavage of the carbon-nitrogen bond in imidazolone-5-propanoate to yield N-formimidoyl-L-glutamate. It is the third step in the universal histidine degradation pathway. In Pseudomonas fluorescens (strain Pf0-1), this protein is Imidazolonepropionase.